A 619-amino-acid polypeptide reads, in one-letter code: CREB-regulated transcription coactivator 3 (619 aa).

Residues S4 and S62 each carry the phosphoserine modification. A disordered region spans residues 129–148 (SQHLDESWPRQQPPWKEEKH). The residue at position 160 (T160) is a Phosphothreonine. S162 is modified (phosphoserine; by SIK2). K232 is covalently cross-linked (Glycyl lysine isopeptide (Lys-Gly) (interchain with G-Cter in SUMO2)). Residues S273, S329, S332, S370, S391, S396, and S410 each carry the phosphoserine modification. Residues 375-478 (STTNLSGPSR…TQQPQAAPSL (104 aa)) are disordered. Positions 380 to 401 (SGPSRRRQPPVSPLTLSPGPEA) are required for interaction with PPP2CA and PPP2R1A. Composition is skewed to polar residues over residues 405 to 415 (FSRQLSATSPL) and 422 to 431 (QMVTSEQSPL). At S443 the chain carries Phosphoserine. The segment covering 443-454 (SPPPPYPTPQEL) has biased composition (pro residues). Residues 455–478 (PQPLLQQPHAQEPPTQQPQAAPSL) show a composition bias toward low complexity.

The protein belongs to the TORC family. As to quaternary structure, binding, as a tetramer, through its N-terminal region, with the bZIP domain of CREB1 enhances recruitment of TAF4 to the promoter. 'Arg-314' in the bZIP domain of CREB1 is essential for this interaction. Interacts (when phosphorylated at Ser-162 and Se-273) with 14-3-3 proteins. Interacts with YWHAE. Interacts (when phosphorylated at Ser-391) with phosphatase PP2A catalytic subunit PPP2CA and regulatory subunits PPP2R1A and PPP2R2A. Post-translationally, phosphorylation/dephosphorylation states of Ser-273 are required for regulating transduction of CREB activity. CRTCs/TORCs are inactive when phosphorylated, and active when dephosphorylated at this site. May be phosphorylated at Ser-391 by MAPK3/ERK1 and/or MAPK1/ERK2 or by some cyclin-dependent kinases such as CDK1,CDK2 or CDK5. Following adenylyl cyclase activation, dephosphorylated at Ser-162 and Ser-273 resulting in its dissociation from 14-3-3 proteins probably promoting CRTC3 translocation into the nucleus. As to expression, expressed in brown adipose tissues.

It localises to the nucleus. The protein resides in the cytoplasm. Transcriptional coactivator for CREB1 which activates transcription through both consensus and variant cAMP response element (CRE) sites. Acts as a coactivator, in the SIK/TORC signaling pathway, being active when dephosphorylated. Acts independently of CREB1 'Ser-133' phosphorylation. Enhances the interaction of CREB1 with TAF4. Regulates the expression of specific CREB-activated genes such as the steroidogenic gene, StAR. Potent coactivator of PPARGC1A and inducer of mitochondrial biogenesis in muscle cells. This chain is CREB-regulated transcription coactivator 3 (Crtc3), found in Mus musculus (Mouse).